Reading from the N-terminus, the 133-residue chain is Small ribosomal subunit protein uS8 (133 aa).

The tract at residues 1–32 (MANHDPISDMLTRIRNASEKRHESTKVPASRM) is disordered. The span at 16 to 25 (NASEKRHEST) shows a compositional bias: basic and acidic residues.

This sequence belongs to the universal ribosomal protein uS8 family. Part of the 30S ribosomal subunit. Contacts proteins S5 and S12.

In terms of biological role, one of the primary rRNA binding proteins, it binds directly to 16S rRNA central domain where it helps coordinate assembly of the platform of the 30S subunit. This Synechococcus sp. (strain CC9311) protein is Small ribosomal subunit protein uS8.